A 257-amino-acid chain; its full sequence is Indole-3-glycerol phosphate synthase (257 aa).

The protein belongs to the TrpC family.

The enzyme catalyses 1-(2-carboxyphenylamino)-1-deoxy-D-ribulose 5-phosphate + H(+) = (1S,2R)-1-C-(indol-3-yl)glycerol 3-phosphate + CO2 + H2O. Its pathway is amino-acid biosynthesis; L-tryptophan biosynthesis; L-tryptophan from chorismate: step 4/5. The sequence is that of Indole-3-glycerol phosphate synthase from Halalkalibacterium halodurans (strain ATCC BAA-125 / DSM 18197 / FERM 7344 / JCM 9153 / C-125) (Bacillus halodurans).